The primary structure comprises 206 residues: ATP synthase subunit b (206 aa).

The helical transmembrane segment at 14–34 threads the bilayer; sequence VMMPAAVCAAVIGLSALGFAA.

Belongs to the ATPase B chain family. In terms of assembly, F-type ATPases have 2 components, F(1) - the catalytic core - and F(0) - the membrane proton channel. F(1) has five subunits: alpha(3), beta(3), gamma(1), delta(1), epsilon(1). F(0) has three main subunits: a(1), b(2) and c(10-14). The alpha and beta chains form an alternating ring which encloses part of the gamma chain. F(1) is attached to F(0) by a central stalk formed by the gamma and epsilon chains, while a peripheral stalk is formed by the delta and b chains.

The protein localises to the cell inner membrane. Its function is as follows. F(1)F(0) ATP synthase produces ATP from ADP in the presence of a proton or sodium gradient. F-type ATPases consist of two structural domains, F(1) containing the extramembraneous catalytic core and F(0) containing the membrane proton channel, linked together by a central stalk and a peripheral stalk. During catalysis, ATP synthesis in the catalytic domain of F(1) is coupled via a rotary mechanism of the central stalk subunits to proton translocation. Functionally, component of the F(0) channel, it forms part of the peripheral stalk, linking F(1) to F(0). This Geobacter metallireducens (strain ATCC 53774 / DSM 7210 / GS-15) protein is ATP synthase subunit b.